A 364-amino-acid polypeptide reads, in one-letter code: UDP-N-acetylglucosamine--N-acetylmuramyl-(pentapeptide) pyrophosphoryl-undecaprenol N-acetylglucosamine transferase (364 aa).

Residues 10–12 (TGG), Asn128, Arg170, Ser199, Ile250, and Gln295 each bind UDP-N-acetyl-alpha-D-glucosamine.

The protein belongs to the glycosyltransferase 28 family. MurG subfamily.

It is found in the cell inner membrane. The enzyme catalyses di-trans,octa-cis-undecaprenyl diphospho-N-acetyl-alpha-D-muramoyl-L-alanyl-D-glutamyl-meso-2,6-diaminopimeloyl-D-alanyl-D-alanine + UDP-N-acetyl-alpha-D-glucosamine = di-trans,octa-cis-undecaprenyl diphospho-[N-acetyl-alpha-D-glucosaminyl-(1-&gt;4)]-N-acetyl-alpha-D-muramoyl-L-alanyl-D-glutamyl-meso-2,6-diaminopimeloyl-D-alanyl-D-alanine + UDP + H(+). It functions in the pathway cell wall biogenesis; peptidoglycan biosynthesis. Its function is as follows. Cell wall formation. Catalyzes the transfer of a GlcNAc subunit on undecaprenyl-pyrophosphoryl-MurNAc-pentapeptide (lipid intermediate I) to form undecaprenyl-pyrophosphoryl-MurNAc-(pentapeptide)GlcNAc (lipid intermediate II). This Chlorobaculum parvum (strain DSM 263 / NCIMB 8327) (Chlorobium vibrioforme subsp. thiosulfatophilum) protein is UDP-N-acetylglucosamine--N-acetylmuramyl-(pentapeptide) pyrophosphoryl-undecaprenol N-acetylglucosamine transferase.